The chain runs to 749 residues: Chaperone protein DnaK 1 (749 aa).

Position 198 is a phosphothreonine; by autocatalysis (Thr-198). 3 stretches are compositionally biased toward basic and acidic residues: residues 643-653 (RWDADPWDRSR), 661-694 (YDDR…RDRN), and 711-724 (PTWE…RDRS). The interval 643 to 749 (RWDADPWDRS…GWDDDDDEWF (107 aa)) is disordered. Over residues 740–749 (GWDDDDDEWF) the composition is skewed to acidic residues.

Belongs to the heat shock protein 70 family.

Functionally, acts as a chaperone. The sequence is that of Chaperone protein DnaK 1 from Synechococcus sp. (strain ATCC 27144 / PCC 6301 / SAUG 1402/1) (Anacystis nidulans).